Reading from the N-terminus, the 190-residue chain is uncharacterized protein (190 aa).

It to E.coli YdjR.

This is an uncharacterized protein from Pseudomonas putida (Arthrobacter siderocapsulatus).